A 778-amino-acid chain; its full sequence is Lon protease (778 aa).

The Lon N-terminal domain occupies 6–207 (LPLMALRDMV…TVISMLNSNI (202 aa)). 356 to 363 (GPPGVGKT) lines the ATP pocket. Residues 592–773 (EDQIGSTTGL…DQVLKHALVG (182 aa)) form the Lon proteolytic domain. Residues serine 679 and lysine 722 contribute to the active site.

It belongs to the peptidase S16 family. Homohexamer. Organized in a ring with a central cavity.

The protein resides in the cytoplasm. It carries out the reaction Hydrolysis of proteins in presence of ATP.. Its function is as follows. ATP-dependent serine protease that mediates the selective degradation of mutant and abnormal proteins as well as certain short-lived regulatory proteins. Required for cellular homeostasis and for survival from DNA damage and developmental changes induced by stress. Degrades polypeptides processively to yield small peptide fragments that are 5 to 10 amino acids long. Binds to DNA in a double-stranded, site-specific manner. The sequence is that of Lon protease from Rickettsia conorii (strain ATCC VR-613 / Malish 7).